Consider the following 351-residue polypeptide: Ribosomal RNA small subunit methyltransferase H (351 aa).

S-adenosyl-L-methionine contacts are provided by residues 48–50 (GGY), aspartate 67, phenylalanine 94, aspartate 115, and glutamine 122. Residues 274-351 (AAQASRHVPG…PAPQGRGPRR (78 aa)) are disordered.

Belongs to the methyltransferase superfamily. RsmH family.

The protein resides in the cytoplasm. The catalysed reaction is cytidine(1402) in 16S rRNA + S-adenosyl-L-methionine = N(4)-methylcytidine(1402) in 16S rRNA + S-adenosyl-L-homocysteine + H(+). In terms of biological role, specifically methylates the N4 position of cytidine in position 1402 (C1402) of 16S rRNA. In Methylorubrum extorquens (strain ATCC 14718 / DSM 1338 / JCM 2805 / NCIMB 9133 / AM1) (Methylobacterium extorquens), this protein is Ribosomal RNA small subunit methyltransferase H.